A 187-amino-acid chain; its full sequence is Protein TfaD (187 aa).

The protein in the C-terminal section; belongs to the tfa family.

In Escherichia coli (strain K12), this protein is Protein TfaD (tfaD).